We begin with the raw amino-acid sequence, 2774 residues long: Teneurin-2 (2774 aa).

One can recognise a Teneurin N-terminal domain in the interval 1–375; sequence MDVKDRRHRS…KPSKYCSWKC (375 aa). At 1–379 the chain is on the cytoplasmic side; the sequence is MDVKDRRHRS…YCSWKCAALS (379 aa). 2 positions are modified to phosphoserine: Ser-90 and Ser-124. Residues 111 to 271 form a disordered region; sequence TGSDADSDTE…HHHSSANSLN (161 aa). Residues 141–155 are compositionally biased toward polar residues; it reads SSGLSSRENSALTLT. Thr-155 is subject to Phosphothreonine. Phosphoserine is present on Ser-157. Positions 159-168 are enriched in basic and acidic residues; it reads NENKSDDDNG. Positions 174-188 are enriched in low complexity; the sequence is TSSSSLLPSAQLPSS. Positions 202–211 are enriched in polar residues; it reads DSNTSHQIMD. A compositionally biased stretch (low complexity) spans 229–240; the sequence is SGPQQASSSGPP. Residues 380-400 traverse the membrane as a helical segment; sequence AIAAALLLAILLAYFIAMHLL. Topologically, residues 401–2774 are extracellular; it reads GLNWQLQPAD…FLRQNEMGKR (2374 aa). N-linked (GlcNAc...) asparagine glycosylation is found at Asn-443 and Asn-482. EGF-like domains are found at residues 575–603, 605–634, 636–668, 669–701, 702–735, 738–766, 769–797, and 808–841; these read DCPR…ADCA, AACP…AECD, PMNQ…EHCE, EVDC…NCEL, ARVQ…PDCS, VCSV…AACD, VCHP…EHCT, and DGCP…PGCN. Cystine bridges form between Cys-576–Cys-586, Cys-580–Cys-591, Cys-593–Cys-602, Cys-611–Cys-622, Cys-624–Cys-633, Cys-640–Cys-651, Cys-645–Cys-656, Cys-658–Cys-667, Cys-672–Cys-683, Cys-677–Cys-688, Cys-690–Cys-699, Cys-710–Cys-723, Cys-725–Cys-734, Cys-739–Cys-749, Cys-743–Cys-754, Cys-756–Cys-765, Cys-770–Cys-780, Cys-774–Cys-785, Cys-787–Cys-796, Cys-810–Cys-820, Cys-814–Cys-829, and Cys-831–Cys-840. Residues Asn-925, Asn-948, and Asn-1267 are each glycosylated (N-linked (GlcNAc...) asparagine). 5 NHL repeats span residues 1272–1316, 1342–1386, 1401–1452, 1474–1501, and 1530–1573; these read LELR…VKSL, ARCG…NGII, LSCD…IAGR, LESA…INRL, and CYSG…VSKN. The YD 1 repeat unit spans residues 1583–1602; sequence YEAASPGEQELYVFNADGIH. Asn-1616 carries an N-linked (GlcNAc...) asparagine glycan. YD repeat units follow at residues 1619 to 1639, 1682 to 1701, and 1702 to 1724; these read YSAD…LKIR, YDGN…WTTF, and YDYD…TSLH. N-linked (GlcNAc...) asparagine glycosylation is found at Asn-1712, Asn-1749, Asn-1773, Asn-1807, and Asn-1892. YD repeat units follow at residues 1895-1914, 1936-1954, 1955-1975, 1982-1999, 2000-2021, 2022-2039, 2042-2062, 2065-2085, 2093-2113, 2119-2136, 2137-2163, 2165-2178, 2179-2202, 2205-2225, 2226-2246, 2248-2268, 2280-2300, and 2302-2322; these read YFFN…ERTD, YLDK…YIFE, YDSS…HSMS, YIRN…VIFD, YSDD…VFYK, YGKL…TAVT, YDET…FSCT, YRKV…EGMI, YHDN…TPLP, YDEI…GVIY, YDIN…IKEV, YEMF…MTVQ, YDSM…TKYT, YDGD…WRYS, YDLN…LMPL, YDLR…DDDG, YNSK…SVQY, and YDGV…LQYF. A glycan (N-linked (GlcNAc...) asparagine) is linked at Asn-1993. Asn-2197 is a glycosylation site (N-linked (GlcNAc...) asparagine). The N-linked (GlcNAc...) asparagine glycan is linked to Asn-2337. Residues 2348–2389 form a YD 23 repeat; sequence YDLQGHLFAMESSSGEEYYVASDNTGTPLAVFSINGLMIKQL. N-linked (GlcNAc...) asparagine glycosylation is present at Asn-2648.

The protein belongs to the tenascin family. Teneurin subfamily. In terms of assembly, homodimer; disulfide-linked. Heterodimer with either TENM1 or TENM3. May also form heterodimer with TENM4. Interacts with ADGRL1 isoform 2. Derives from the membrane form by proteolytic processing. In terms of processing, derives from the plasma membrane form by proteolytic cleavage and translocates to the nucleus. Homophilic binding of the C-terminal extracellular domain stimulates its proteolytic cleavage and release in the cytoplasmic. Is subjected to rapid degradation by the proteasome pathway. As to expression, expressed in the brain (at protein level).

Its subcellular location is the cell membrane. The protein localises to the presynaptic cell membrane. It is found in the postsynaptic cell membrane. It localises to the endoplasmic reticulum. The protein resides in the golgi apparatus. Its subcellular location is the synapse. The protein localises to the cell projection. It is found in the dendritic spine. It localises to the filopodium. The protein resides in the growth cone. Its subcellular location is the nucleus. The protein localises to the PML body. Involved in neural development, regulating the establishment of proper connectivity within the nervous system. Acts as a ligand of the ADGRL1 and ADGRL3 receptors that are expressed at the surface of adjacent cells. Promotes the formation of filopodia and enlarged growth cone in neuronal cells. Mediates axon guidance and homophilic and heterophilic cell-cell adhesion. May function as a cellular signal transducer. Its function is as follows. Induces gene transcription inhibition. This chain is Teneurin-2 (Tenm2), found in Rattus norvegicus (Rat).